The sequence spans 927 residues: Translation initiation factor IF-2 (927 aa).

Residues 27–337 (LGLPVKSHAS…GAPKPVTERK (311 aa)) form a disordered region. A compositionally biased stretch (polar residues) spans 49–69 (SFSSSKTKAPTNSVQTNQGVK). Basic and acidic residues-rich tracts occupy residues 70 to 86 (TESK…DDKP) and 101 to 138 (FKAE…DRRH). Residues 146–159 (GNRNDNRQGQQNNR) show a composition bias toward low complexity. Basic and acidic residues-rich tracts occupy residues 160 to 171 (NKNDGRYADHKQ), 202 to 226 (YSRH…EQEL), and 234 to 257 (AQEE…KEIV). A compositionally biased stretch (low complexity) spans 300–316 (NWNNQNQVRNQRNSNWN). Residues 428–597 (ERPPVVTIMG…LLVAEMEELK (170 aa)) enclose the tr-type G domain. Residues 437 to 444 (GHVDHGKT) are G1. Position 437 to 444 (437 to 444 (GHVDHGKT)) interacts with GTP. Residues 462–466 (GITQH) form a G2 region. The interval 483-486 (DTPG) is G3. GTP-binding positions include 483 to 487 (DTPGH) and 537 to 540 (NKID). The tract at residues 537-540 (NKID) is G4. The interval 573–575 (SAK) is G5.

This sequence belongs to the TRAFAC class translation factor GTPase superfamily. Classic translation factor GTPase family. IF-2 subfamily.

The protein localises to the cytoplasm. Its function is as follows. One of the essential components for the initiation of protein synthesis. Protects formylmethionyl-tRNA from spontaneous hydrolysis and promotes its binding to the 30S ribosomal subunits. Also involved in the hydrolysis of GTP during the formation of the 70S ribosomal complex. In Streptococcus agalactiae serotype V (strain ATCC BAA-611 / 2603 V/R), this protein is Translation initiation factor IF-2.